The following is a 235-amino-acid chain: Aspartate/glutamate leucyltransferase (235 aa).

The protein belongs to the R-transferase family. Bpt subfamily.

The protein localises to the cytoplasm. The enzyme catalyses N-terminal L-glutamyl-[protein] + L-leucyl-tRNA(Leu) = N-terminal L-leucyl-L-glutamyl-[protein] + tRNA(Leu) + H(+). It catalyses the reaction N-terminal L-aspartyl-[protein] + L-leucyl-tRNA(Leu) = N-terminal L-leucyl-L-aspartyl-[protein] + tRNA(Leu) + H(+). Functions in the N-end rule pathway of protein degradation where it conjugates Leu from its aminoacyl-tRNA to the N-termini of proteins containing an N-terminal aspartate or glutamate. This Pseudomonas fluorescens (strain SBW25) protein is Aspartate/glutamate leucyltransferase.